Consider the following 156-residue polypeptide: Endoribonuclease YbeY (156 aa).

Residues histidine 115, histidine 119, and histidine 125 each coordinate Zn(2+).

Belongs to the endoribonuclease YbeY family. The cofactor is Zn(2+).

It is found in the cytoplasm. Single strand-specific metallo-endoribonuclease involved in late-stage 70S ribosome quality control and in maturation of the 3' terminus of the 16S rRNA. In Mannheimia succiniciproducens (strain KCTC 0769BP / MBEL55E), this protein is Endoribonuclease YbeY.